Consider the following 378-residue polypeptide: Zinc finger protein DPF3 (378 aa).

Residue Lys99 forms a Glycyl lysine isopeptide (Lys-Gly) (interchain with G-Cter in SUMO2) linkage. Residues 146 to 193 (LENDENVEEGNEEEDLEEDVPKRKNRTRGRARGSAGGRRRHDAASQED) form a disordered region. A compositionally biased stretch (acidic residues) spans 148–163 (NDENVEEGNEEEDLEE). Over residues 168–186 (RKNRTRGRARGSAGGRRRH) the composition is skewed to basic residues. A C2H2-type zinc finger spans residues 198-221 (YVCDICGKRYKNRPGLSYHYAHTH). The interval 225–254 (EEGDEAQDQETRSPPNHRNENHRPQKGPDG) is disordered. PHD-type zinc fingers lie at residues 259 to 319 (NNYC…CKSC) and 316 to 366 (CKSC…CWEL). The interval 317-332 (KSCILCGTSENDDQLL) is interaction with HDGFL2. Gly323 is modified (phosphoserine).

This sequence belongs to the requiem/DPF family. In terms of assembly, component of the BAF complex, which includes at least actin (ACTB), ARID1A, ARID1B/BAF250, SMARCA2, SMARCA4/BRG1/BAF190A, ACTL6A/BAF53, ACTL6B/BAF53B, SMARCE1/BAF57, SMARCC1/BAF155, SMARCC2/BAF170, SMARCB1/SNF5/INI1, and one or more of SMARCD1/BAF60A, SMARCD2/BAF60B, or SMARCD3/BAF60C. In muscle cells, the BAF complex also contains DPF3. Interacts with acetylated histones H3 and H4. Component of neuron-specific chromatin remodeling complex (nBAF complex) composed of at least, ARID1A/BAF250A or ARID1B/BAF250B, SMARCD1/BAF60A, SMARCD3/BAF60C, SMARCA2/BRM/BAF190B, SMARCA4/BRG1/BAF190A, SMARCB1/BAF47, SMARCC1/BAF155, SMARCE1/BAF57, SMARCC2/BAF170, DPF1/BAF45B, DPF3/BAF45C, ACTL6B/BAF53B and actin. Interacts with HDGFL2. Interacts with SMARCA4/BRG1/BAF190A, SMARCC1/BAF155 and SMARCD1/BAF60A. In terms of tissue distribution, expressed in the heart and somites. Expressed in cerebellum and spinal cord, but not in cerebral cortex. Expressed specifically in post-mitotic neurons (at protein level).

It is found in the nucleus. Functionally, muscle-specific component of the BAF complex, a multiprotein complex involved in transcriptional activation and repression of select genes by chromatin remodeling (alteration of DNA-nucleosome topology). Specifically binds acetylated lysines on histone 3 and 4 (H3K14ac, H3K9ac, H4K5ac, H4K8ac, H4K12ac, H4K16ac). In the complex, it acts as a tissue-specific anchor between histone acetylations and methylations and chromatin remodeling. It thereby probably plays an essential role in heart and skeletal muscle development. Belongs to the neuron-specific chromatin remodeling complex (nBAF complex). During neural development a switch from a stem/progenitor to a post-mitotic chromatin remodeling mechanism occurs as neurons exit the cell cycle and become committed to their adult state. The transition from proliferating neural stem/progenitor cells to post-mitotic neurons requires a switch in subunit composition of the npBAF and nBAF complexes. As neural progenitors exit mitosis and differentiate into neurons, npBAF complexes which contain ACTL6A/BAF53A and PHF10/BAF45A, are exchanged for homologous alternative ACTL6B/BAF53B and DPF1/BAF45B or DPF3/BAF45C subunits in neuron-specific complexes (nBAF). The npBAF complex is essential for the self-renewal/proliferative capacity of the multipotent neural stem cells. The nBAF complex along with CREST plays a role regulating the activity of genes essential for dendrite growth. Its function is as follows. Acts as a regulator of myogenesis in cooperation with HDGFL2. Mediates the interaction of HDGFL2 with the BAF complex. HDGFL2-DPF3a activate myogenic genes by increasing chromatin accessibility through recruitment of SMARCA4/BRG1/BAF190A (ATPase subunit of the BAF complex) to myogenic gene promoters. The chain is Zinc finger protein DPF3 (Dpf3) from Mus musculus (Mouse).